Here is a 387-residue protein sequence, read N- to C-terminus: Succinate--CoA ligase [ADP-forming] subunit beta (387 aa).

The ATP-grasp domain maps to 9 to 245; it reads KDLLESYGLK…KSQENAKELK (237 aa). Residues K46, 53–55, E100, Y103, and E108 contribute to the ATP site; that span reads GRG. The Mg(2+) site is built by N200 and D214. Substrate-binding positions include N265 and 322–324; that span reads GIV.

Belongs to the succinate/malate CoA ligase beta subunit family. In terms of assembly, heterotetramer of two alpha and two beta subunits. Mg(2+) serves as cofactor.

The catalysed reaction is succinate + ATP + CoA = succinyl-CoA + ADP + phosphate. The enzyme catalyses GTP + succinate + CoA = succinyl-CoA + GDP + phosphate. It functions in the pathway carbohydrate metabolism; tricarboxylic acid cycle; succinate from succinyl-CoA (ligase route): step 1/1. Functionally, succinyl-CoA synthetase functions in the citric acid cycle (TCA), coupling the hydrolysis of succinyl-CoA to the synthesis of either ATP or GTP and thus represents the only step of substrate-level phosphorylation in the TCA. The beta subunit provides nucleotide specificity of the enzyme and binds the substrate succinate, while the binding sites for coenzyme A and phosphate are found in the alpha subunit. This chain is Succinate--CoA ligase [ADP-forming] subunit beta, found in Francisella tularensis subsp. holarctica (strain FTNF002-00 / FTA).